The sequence spans 448 residues: Probable glycine dehydrogenase (decarboxylating) subunit 1 (448 aa).

Belongs to the GcvP family. N-terminal subunit subfamily. The glycine cleavage system is composed of four proteins: P, T, L and H. In this organism, the P 'protein' is a heterodimer of two subunits.

It catalyses the reaction N(6)-[(R)-lipoyl]-L-lysyl-[glycine-cleavage complex H protein] + glycine + H(+) = N(6)-[(R)-S(8)-aminomethyldihydrolipoyl]-L-lysyl-[glycine-cleavage complex H protein] + CO2. Its function is as follows. The glycine cleavage system catalyzes the degradation of glycine. The P protein binds the alpha-amino group of glycine through its pyridoxal phosphate cofactor; CO(2) is released and the remaining methylamine moiety is then transferred to the lipoamide cofactor of the H protein. This is Probable glycine dehydrogenase (decarboxylating) subunit 1 from Staphylococcus epidermidis (strain ATCC 35984 / DSM 28319 / BCRC 17069 / CCUG 31568 / BM 3577 / RP62A).